Consider the following 50-residue polypeptide: Inter-alpha-trypsin inhibitor heavy chain H2 (50 aa).

Belongs to the ITIH family. I-alpha-I plasma protease inhibitors are assembled from one or two heavy chains (HC) and one light chain, bikunin. Inter-alpha-inhibitor (I-alpha-I) is composed of ITIH1/HC1, ITIH2/HC2 and bikunin. In terms of processing, phosphorylated by FAM20C in the extracellular medium.

The protein resides in the secreted. May act as a carrier of hyaluronan in serum or as a binding protein between hyaluronan and other matrix protein, including those on cell surfaces in tissues to regulate the localization, synthesis and degradation of hyaluronan which are essential to cells undergoing biological processes. The protein is Inter-alpha-trypsin inhibitor heavy chain H2 (ITIH2) of Bos taurus (Bovine).